Reading from the N-terminus, the 155-residue chain is Transcription antitermination protein NusB (155 aa).

It belongs to the NusB family.

Its function is as follows. Involved in transcription antitermination. Required for transcription of ribosomal RNA (rRNA) genes. Binds specifically to the boxA antiterminator sequence of the ribosomal RNA (rrn) operons. The chain is Transcription antitermination protein NusB from Vibrio atlanticus (strain LGP32) (Vibrio splendidus (strain Mel32)).